A 343-amino-acid chain; its full sequence is Protein RecA (343 aa).

Position 66 to 73 (glycine 66 to threonine 73) interacts with ATP.

Belongs to the RecA family.

It localises to the cytoplasm. Its function is as follows. Can catalyze the hydrolysis of ATP in the presence of single-stranded DNA, the ATP-dependent uptake of single-stranded DNA by duplex DNA, and the ATP-dependent hybridization of homologous single-stranded DNAs. It interacts with LexA causing its activation and leading to its autocatalytic cleavage. The chain is Protein RecA from Rickettsia africae (strain ESF-5).